The following is a 376-amino-acid chain: Thiol-disulfide oxidoreductase LTO1 (376 aa).

The transit peptide at 1 to 45 directs the protein to the chloroplast; that stretch reads MMARFVSVSSCQFHFGFREVSPPSVTSYPRRFEVSDRRFPAIPIK. Positions 44–77 are disordered; the sequence is IKCSSSEPENGEDSAPSLSSSSSSSTSEVSTSNS. Topologically, residues 46-81 are stromal; that stretch reads CSSSEPENGEDSAPSLSSSSSSSTSEVSTSNSSTYN. A compositionally biased stretch (low complexity) spans 57 to 77; the sequence is SAPSLSSSSSSSTSEVSTSNS. A helical transmembrane segment spans residues 82-102; it reads WYTGIGGIGMLDTAYLTYLKV. Residues 103-125 are Lumenal-facing; that stretch reads TGSDAFCPIGGGTCGDVLNSDYA. An intrachain disulfide couples Cys-109 to Cys-116. Residues 126–146 traverse the membrane as a helical segment; that stretch reads VVFGVPLPVIGFVMYGVVTAL. The Stromal portion of the chain corresponds to 147–165; that stretch reads SAELGEGNLPFGISKSNGR. A helical membrane pass occupies residues 166-186; sequence FALFGITTAMASASAYFLYIL. Residues 187–192 are Lumenal-facing; the sequence is STKLSG. A helical membrane pass occupies residues 193–213; that stretch reads SSCLYCLVSAFLSFSLFFLSV. Cys-195 and Cys-198 are joined by a disulfide. Over 214 to 223 the chain is Stromal; that stretch reads KDVKLQEIQQ. The helical transmembrane segment at 224–244 threads the bilayer; it reads VVGLQICLAIIVVASLTASYS. The Lumenal segment spans residues 245–376; the sequence is TAQPIPSRSG…DQANETNQLQ (132 aa). 2 disulfide bridges follow: Cys-293-Cys-296 and Cys-316-Cys-331.

This sequence belongs to the VKOR family. Interacts with the PSII subunits PSBO1 and PSBO2. Interacts with TL17, TL20.3, HCF164, PETJ, VDE1, EDA3, FKBP13 and FKBP20-2. Expressed in cotyledons, rosette leaves, stems, cauline leaves and flowers.

Its subcellular location is the plastid. It localises to the chloroplast thylakoid membrane. Thiol-disulfide oxidoreductase catalyzing disulfide bond formation of chloroplast proteins and involved in redox regulation and photosynthetic electron transport. Required for the assembly of photosystem II (PSII) through the formation of disulfide bond in PSBO, a subunit of the PSII oxygen-evolving complex in the thylakoid lumen. Involved in the formation of disulfide bonds in the lumenal protein FKBP13. In vitro, reduces phylloquinone (vitamin K1) and menaquinone (vitamin K2) to their respective quinol. Cannot reduce phylloquinone epoxide to phylloquinone. Plays an important role in regulating the thylakoid lumen redox. The chain is Thiol-disulfide oxidoreductase LTO1 from Arabidopsis thaliana (Mouse-ear cress).